The sequence spans 80 residues: Large ribosomal subunit protein uL29 (80 aa).

The protein belongs to the universal ribosomal protein uL29 family.

The polypeptide is Large ribosomal subunit protein uL29 (Saccharopolyspora erythraea (strain ATCC 11635 / DSM 40517 / JCM 4748 / NBRC 13426 / NCIMB 8594 / NRRL 2338)).